The sequence spans 204 residues: uncharacterized protein (204 aa).

A helical transmembrane segment spans residues 160–180 (GLTVAAIASVVVAGAVTYLVV).

To M.pneumoniae MPN_373 C-terminal region.

It localises to the cell membrane. This is an uncharacterized protein from Mycoplasma pneumoniae (strain ATCC 29342 / M129 / Subtype 1) (Mycoplasmoides pneumoniae).